The primary structure comprises 276 residues: Ribosomal RNA small subunit methyltransferase A (276 aa).

The S-adenosyl-L-methionine site is built by Asn-27, Leu-29, Gly-54, Glu-75, Asp-101, and Asn-122.

Belongs to the class I-like SAM-binding methyltransferase superfamily. rRNA adenine N(6)-methyltransferase family. RsmA subfamily.

Its subcellular location is the cytoplasm. It catalyses the reaction adenosine(1518)/adenosine(1519) in 16S rRNA + 4 S-adenosyl-L-methionine = N(6)-dimethyladenosine(1518)/N(6)-dimethyladenosine(1519) in 16S rRNA + 4 S-adenosyl-L-homocysteine + 4 H(+). Specifically dimethylates two adjacent adenosines (A1518 and A1519) in the loop of a conserved hairpin near the 3'-end of 16S rRNA in the 30S particle. May play a critical role in biogenesis of 30S subunits. This chain is Ribosomal RNA small subunit methyltransferase A, found in Brucella suis (strain ATCC 23445 / NCTC 10510).